Reading from the N-terminus, the 431-residue chain is Adenylosuccinate synthetase (431 aa).

Residues 13-19 (GDEGKGK) and 41-43 (GHT) contribute to the GTP site. Catalysis depends on D14, which acts as the Proton acceptor. Residues D14 and G41 each coordinate Mg(2+). IMP contacts are provided by residues 14–17 (DEGK), 39–42 (NAGH), T130, R144, Q225, T240, and R304. H42 serves as the catalytic Proton donor. 300–306 (ATTGRER) contributes to the substrate binding site. GTP contacts are provided by residues R306, 332–334 (KLD), and 415–417 (STG).

Belongs to the adenylosuccinate synthetase family. Homodimer. Mg(2+) serves as cofactor.

Its subcellular location is the cytoplasm. The catalysed reaction is IMP + L-aspartate + GTP = N(6)-(1,2-dicarboxyethyl)-AMP + GDP + phosphate + 2 H(+). It functions in the pathway purine metabolism; AMP biosynthesis via de novo pathway; AMP from IMP: step 1/2. Plays an important role in the de novo pathway of purine nucleotide biosynthesis. Catalyzes the first committed step in the biosynthesis of AMP from IMP. This Colwellia psychrerythraea (strain 34H / ATCC BAA-681) (Vibrio psychroerythus) protein is Adenylosuccinate synthetase.